The following is a 122-amino-acid chain: Large ribosomal subunit protein bL12 (122 aa).

It belongs to the bacterial ribosomal protein bL12 family. As to quaternary structure, homodimer. Part of the ribosomal stalk of the 50S ribosomal subunit. Forms a multimeric L10(L12)X complex, where L10 forms an elongated spine to which 2 to 4 L12 dimers bind in a sequential fashion. Binds GTP-bound translation factors.

Its function is as follows. Forms part of the ribosomal stalk which helps the ribosome interact with GTP-bound translation factors. Is thus essential for accurate translation. The polypeptide is Large ribosomal subunit protein bL12 (Glaesserella parasuis serovar 5 (strain SH0165) (Haemophilus parasuis)).